The sequence spans 285 residues: Nucleotide-binding protein CD630_34000 (285 aa).

8–15 (GLSGSGKS) lines the ATP pocket. 59–62 (DIRG) contributes to the GTP binding site.

It belongs to the RapZ-like family.

Functionally, displays ATPase and GTPase activities. The sequence is that of Nucleotide-binding protein CD630_34000 from Clostridioides difficile (strain 630) (Peptoclostridium difficile).